A 197-amino-acid chain; its full sequence is NADH-quinone oxidoreductase subunit I 2 (197 aa).

4Fe-4S ferredoxin-type domains are found at residues 42-71 and 91-120; these read GVIG…IDSH and DRFA…WSPE. The [4Fe-4S] cluster site is built by cysteine 51, cysteine 54, cysteine 57, cysteine 61, cysteine 100, cysteine 103, cysteine 106, and cysteine 110. Residues 147-197 form a disordered region; it reads APPALDPGAEEPKELAAARKAADKLAAQQQPDQPGPDHPGQPDESGQEGRT. A compositionally biased stretch (basic and acidic residues) spans 156–169; the sequence is EEPKELAAARKAAD.

This sequence belongs to the complex I 23 kDa subunit family. NDH-1 is composed of 14 different subunits. Subunits NuoA, H, J, K, L, M, N constitute the membrane sector of the complex. [4Fe-4S] cluster is required as a cofactor.

It localises to the cell membrane. The catalysed reaction is a quinone + NADH + 5 H(+)(in) = a quinol + NAD(+) + 4 H(+)(out). In terms of biological role, NDH-1 shuttles electrons from NADH, via FMN and iron-sulfur (Fe-S) centers, to quinones in the respiratory chain. The immediate electron acceptor for the enzyme in this species is believed to be ubiquinone. Couples the redox reaction to proton translocation (for every two electrons transferred, four hydrogen ions are translocated across the cytoplasmic membrane), and thus conserves the redox energy in a proton gradient. The sequence is that of NADH-quinone oxidoreductase subunit I 2 from Streptomyces coelicolor (strain ATCC BAA-471 / A3(2) / M145).